A 565-amino-acid chain; its full sequence is Adenine deaminase (565 aa).

The protein belongs to the metallo-dependent hydrolases superfamily. Adenine deaminase family. Requires Mn(2+) as cofactor.

It carries out the reaction adenine + H2O + H(+) = hypoxanthine + NH4(+). In Cereibacter sphaeroides (strain KD131 / KCTC 12085) (Rhodobacter sphaeroides), this protein is Adenine deaminase.